A 647-amino-acid polypeptide reads, in one-letter code: Putative ferric-chelate reductase 1 homolog (647 aa).

The chain crosses the membrane as a helical span at residues 10–30 (WLATLVTALLAVAIWPDPGQS). Residues 25–195 (PDPGQSLPQG…AAPPLPTQSP (171 aa)) form the Reelin domain. N-linked (GlcNAc...) asparagine glycosylation is found at Asn127 and Asn158. One can recognise a DOMON domain in the interval 245–368 (TKSCTSITVV…GKYHLLVASG (124 aa)). Residues 372–570 (KENSVGYHDI…HLIFSIGGMA (199 aa)) enclose the Cytochrome b561 domain. A helical membrane pass occupies residues 408 to 428 (LHGAFMIAAWIGTTSLGIIFA). 2 residues coordinate heme b: His409 and His450. Transmembrane regions (helical) follow at residues 452 to 472 (LLMV…WVEL), 480 to 500 (HSII…GALF), 515 to 535 (GHWL…FFSV), 548 to 568 (WILV…SIGG), and 616 to 636 (LLGV…LLVV). The heme b site is built by His480 and His516.

The protein belongs to the FRRS1 family. Heme b is required as a cofactor.

The protein localises to the membrane. In terms of biological role, putative ferric-chelate reductases reduce Fe(3+) to Fe(2+) before its transport from the endosome to the cytoplasm. This Drosophila melanogaster (Fruit fly) protein is Putative ferric-chelate reductase 1 homolog.